The sequence spans 151 residues: Small ribosomal subunit protein uS15z (151 aa).

This sequence belongs to the universal ribosomal protein uS15 family.

This is Small ribosomal subunit protein uS15z from Oryza sativa subsp. japonica (Rice).